The sequence spans 199 residues: Large ribosomal subunit protein uL5 (199 aa).

This sequence belongs to the universal ribosomal protein uL5 family. In terms of assembly, part of the 50S ribosomal subunit; part of the 5S rRNA/L5/L18/L25 subcomplex. Contacts the 5S rRNA and the P site tRNA. Forms a bridge to the 30S subunit in the 70S ribosome.

In terms of biological role, this is one of the proteins that bind and probably mediate the attachment of the 5S RNA into the large ribosomal subunit, where it forms part of the central protuberance. In the 70S ribosome it contacts protein S13 of the 30S subunit (bridge B1b), connecting the 2 subunits; this bridge is implicated in subunit movement. Contacts the P site tRNA; the 5S rRNA and some of its associated proteins might help stabilize positioning of ribosome-bound tRNAs. This chain is Large ribosomal subunit protein uL5, found in Frankia casuarinae (strain DSM 45818 / CECT 9043 / HFP020203 / CcI3).